The sequence spans 469 residues: 3-isopropylmalate dehydratase large subunit (469 aa).

Positions 350, 410, and 413 each coordinate [4Fe-4S] cluster.

The protein belongs to the aconitase/IPM isomerase family. LeuC type 1 subfamily. Heterodimer of LeuC and LeuD. It depends on [4Fe-4S] cluster as a cofactor.

It catalyses the reaction (2R,3S)-3-isopropylmalate = (2S)-2-isopropylmalate. Its pathway is amino-acid biosynthesis; L-leucine biosynthesis; L-leucine from 3-methyl-2-oxobutanoate: step 2/4. Functionally, catalyzes the isomerization between 2-isopropylmalate and 3-isopropylmalate, via the formation of 2-isopropylmaleate. In Mesorhizobium japonicum (strain LMG 29417 / CECT 9101 / MAFF 303099) (Mesorhizobium loti (strain MAFF 303099)), this protein is 3-isopropylmalate dehydratase large subunit.